The sequence spans 753 residues: 5-methyltetrahydropteroyltriglutamate--homocysteine methyltransferase (753 aa).

5-methyltetrahydropteroyltri-L-glutamate-binding positions include 17 to 20 and lysine 117; that span reads RELK. Residues 431–433 and glutamate 484 contribute to the L-homocysteine site; that span reads IGS. Residues 431–433 and glutamate 484 each bind L-methionine; that span reads IGS. 5-methyltetrahydropteroyltri-L-glutamate-binding positions include 515–516 and tryptophan 561; that span reads RC. Aspartate 599 is an L-homocysteine binding site. Residue aspartate 599 coordinates L-methionine. A 5-methyltetrahydropteroyltri-L-glutamate-binding site is contributed by glutamate 605. Residues histidine 641, cysteine 643, and glutamate 665 each contribute to the Zn(2+) site. The Proton donor role is filled by histidine 694. Position 726 (cysteine 726) interacts with Zn(2+).

This sequence belongs to the vitamin-B12 independent methionine synthase family. The cofactor is Zn(2+).

The catalysed reaction is 5-methyltetrahydropteroyltri-L-glutamate + L-homocysteine = tetrahydropteroyltri-L-glutamate + L-methionine. The protein operates within amino-acid biosynthesis; L-methionine biosynthesis via de novo pathway; L-methionine from L-homocysteine (MetE route): step 1/1. Catalyzes the transfer of a methyl group from 5-methyltetrahydrofolate to homocysteine resulting in methionine formation. This Cronobacter sakazakii (strain ATCC BAA-894) (Enterobacter sakazakii) protein is 5-methyltetrahydropteroyltriglutamate--homocysteine methyltransferase.